A 565-amino-acid polypeptide reads, in one-letter code: Thiol:disulfide interchange protein DsbD (565 aa).

Positions 1 to 19 (MAQRIFTLILLLCSTSVFA) are cleaved as a signal peptide. Intrachain disulfides connect Cys122-Cys128 and Cys182-Cys304. The next 7 helical transmembrane spans lie at 163 to 183 (LPFS…TPCV), 208 to 228 (LLTF…GLVV), 243 to 263 (YVLI…FGLF), 296 to 316 (IAGL…LLYI), 323 to 343 (WLGG…LMLI), 357 to 377 (WMEQ…VFLL), and 384 to 404 (VWGL…AFIT). Residues 434-565 (WAFGATHTAQ…FSAHLRDRQP (132 aa)) form the Thioredoxin domain. Residues Cys480 and Cys483 are joined by a disulfide bond.

Belongs to the thioredoxin family. DsbD subfamily.

The protein localises to the cell inner membrane. The enzyme catalyses [protein]-dithiol + NAD(+) = [protein]-disulfide + NADH + H(+). The catalysed reaction is [protein]-dithiol + NADP(+) = [protein]-disulfide + NADPH + H(+). Functionally, required to facilitate the formation of correct disulfide bonds in some periplasmic proteins and for the assembly of the periplasmic c-type cytochromes. Acts by transferring electrons from cytoplasmic thioredoxin to the periplasm. This transfer involves a cascade of disulfide bond formation and reduction steps. The chain is Thiol:disulfide interchange protein DsbD from Shigella boydii serotype 4 (strain Sb227).